The primary structure comprises 333 residues: Protoheme IX farnesyltransferase (333 aa).

A run of 8 helical transmembrane segments spans residues 31 to 51, 52 to 72, 115 to 135, 152 to 172, 178 to 198, 223 to 243, 244 to 264, and 303 to 323; these read VMSL…APIH, PVLA…SGAL, MFLG…TIVF, IVIG…AATG, AWLM…ALSL, KQIL…VLTG, LGGP…LLLA, and LFAF…GEAV.

Belongs to the UbiA prenyltransferase family. Protoheme IX farnesyltransferase subfamily.

The protein resides in the cell inner membrane. The enzyme catalyses heme b + (2E,6E)-farnesyl diphosphate + H2O = Fe(II)-heme o + diphosphate. It functions in the pathway porphyrin-containing compound metabolism; heme O biosynthesis; heme O from protoheme: step 1/1. Functionally, converts heme B (protoheme IX) to heme O by substitution of the vinyl group on carbon 2 of heme B porphyrin ring with a hydroxyethyl farnesyl side group. This is Protoheme IX farnesyltransferase from Caulobacter vibrioides (strain ATCC 19089 / CIP 103742 / CB 15) (Caulobacter crescentus).